A 251-amino-acid polypeptide reads, in one-letter code: ATP synthase subunit a (251 aa).

5 consecutive transmembrane segments (helical) span residues T28 to L48, I84 to W104, I130 to W150, I192 to A212, and F220 to F240.

It belongs to the ATPase A chain family. F-type ATPases have 2 components, CF(1) - the catalytic core - and CF(0) - the membrane proton channel. CF(1) has five subunits: alpha(3), beta(3), gamma(1), delta(1), epsilon(1). CF(0) has three main subunits: a(1), b(2) and c(9-12). The alpha and beta chains form an alternating ring which encloses part of the gamma chain. CF(1) is attached to CF(0) by a central stalk formed by the gamma and epsilon chains, while a peripheral stalk is formed by the delta and b chains.

It is found in the cell membrane. Its function is as follows. Key component of the proton channel; it plays a direct role in the translocation of protons across the membrane. The sequence is that of ATP synthase subunit a from Mycobacterium leprae (strain TN).